We begin with the raw amino-acid sequence, 223 residues long: MGQKVHPTGIRLGIVKDWNSKWYADSGQFSELLNNDLAVRSYLAKKLSHALVSNIQIDRPARNARITIHTARPGIVIGKKGEDINNLRQEVSRMMGIPVHINIQEIRKPELDATLVAANVAQQLERRIMFRRAMKRAVTNAMRVGAQGIRIKVSGRLNGAEIARNEWYREGRVPLHTLRADIDYGFAEAKTTYGILGVKVWIFKGEVFEQPEPQVAAGSSAIS.

A KH type-2 domain is found at 39-107 (VRSYLAKKLS…PVHINIQEIR (69 aa)).

Belongs to the universal ribosomal protein uS3 family. As to quaternary structure, part of the 30S ribosomal subunit. Forms a tight complex with proteins S10 and S14.

Its function is as follows. Binds the lower part of the 30S subunit head. Binds mRNA in the 70S ribosome, positioning it for translation. The protein is Small ribosomal subunit protein uS3 of Nitrosococcus oceani (strain ATCC 19707 / BCRC 17464 / JCM 30415 / NCIMB 11848 / C-107).